Reading from the N-terminus, the 708-residue chain is Lactotransferrin (708 aa).

An N-terminal signal peptide occupies residues 1 to 19 (MKLFVPALLSLGALGLCLA). Transferrin-like domains are found at residues 25–352 (VRWC…NLRE) and 364–693 (VVWC…NLKK). 2 disulfides stabilise this stretch: Cys-28/Cys-64 and Cys-38/Cys-55. Fe cation is bound at residue Asp-79. The active site involves Lys-92. Tyr-111 is a Fe cation binding site. 5 cysteine pairs are disulfide-bonded: Cys-134–Cys-217, Cys-176–Cys-192, Cys-179–Cys-202, Cys-189–Cys-200, and Cys-250–Cys-264. Hydrogencarbonate is bound by residues Thr-136, Arg-140, Ala-142, and Gly-143. Tyr-211 contributes to the Fe cation binding site. The N-linked (GlcNAc...) (high mannose) asparagine glycan is linked to Asn-252. His-272 serves as a coordination point for Fe cation. The active-site Nucleophile is the Ser-278. A glycan (N-linked (GlcNAc...) (hybrid) asparagine) is linked at Asn-300. 2 disulfide bridges follow: Cys-367–Cys-399 and Cys-377–Cys-390. Fe cation-binding residues include Asp-414 and Tyr-452. Disulfide bonds link Cys-424/Cys-703, Cys-444/Cys-666, Cys-476/Cys-551, Cys-500/Cys-694, Cys-510/Cys-524, Cys-521/Cys-534, Cys-592/Cys-606, and Cys-644/Cys-649. Positions 478, 482, 484, and 485 each coordinate hydrogencarbonate. N-linked (GlcNAc...) (complex) asparagine; alternate glycosylation is present at Asn-495. The N-linked (GlcNAc...) (high mannose) asparagine; alternate glycan is linked to Asn-495. N-linked (GlcNAc...) (hybrid) asparagine; alternate glycosylation occurs at Asn-495. Tyr-545 provides a ligand contact to Fe cation. Asn-564 carries an N-linked (GlcNAc...) (high mannose) asparagine glycan. Residue His-614 coordinates Fe cation.

The protein belongs to the transferrin family. In terms of assembly, monomer. Found in a complex with LTF, CLU, EPPIN and SEMG1. Found in a complex with MPO and LTF; interacts directly with CP, allows Fe(3+) incorporation into LTF and activation of CP ferroxidase activity. Post-translationally, poly-N-acetyllactosaminic carbohydrate moiety seems to be needed for TLR4 activation.

The protein resides in the secreted. It is found in the cytoplasmic granule. In terms of biological role, transferrins are iron binding transport proteins which can bind two Fe(3+) ions in association with the binding of an anion, usually bicarbonate. Major iron-binding and multifunctional protein found in exocrine fluids such as breast milk and mucosal secretions. Has antimicrobial activity, which depends on the extracellular cation concentration. Antimicrobial properties include bacteriostasis, which is related to its ability to sequester free iron and thus inhibit microbial growth, as well as direct bactericidal properties leading to the release of lipopolysaccharides from the bacterial outer membrane. Can also prevent bacterial biofilm development in P.aeruginosa infection. Has weak antifungal activity against C.albicans. Has anabolic, differentiating and anti-apoptotic effects on osteoblasts and can also inhibit osteoclastogenesis, possibly playing a role in the regulation of bone growth. Promotes binding of species C adenoviruses to epithelial cells, promoting adenovirus infection. Can inhibit papillomavirus infections. Stimulates the TLR4 signaling pathway leading to NF-kappa-B activation and subsequent pro-inflammatory cytokine production while also interfering with the lipopolysaccharide (LPS)-stimulated TLR4 signaling. Inhibits neutrophil granulocyte migration to sites of apoptosis, when secreted by apoptotic cells. Stimulates VEGFA-mediated endothelial cell migration and proliferation. Binds heparin, chondroitin sulfate and possibly other glycosaminoglycans (GAGs). Also binds specifically to pneumococcal surface protein A (PspA), the lipid A portion of bacterial lipopolysaccharide (LPS), lysozyme and DNA. Its function is as follows. Lactoferricin binds to the bacterial surface and is crucial for the bactericidal functions. Has some antiviral activity against papillomavirus infection. N-terminal region shows strong antifungal activity against C.albicans. Contains two BBXB heparin-binding consensus sequences that appear to form the predominate functional GAG-binding site. Functionally, the lactotransferrin transferrin-like domain 1 functions as a serine protease of the peptidase S60 family that cuts arginine rich regions. This function contributes to the antimicrobial activity. Shows a preferential cleavage at -Arg-Ser-Arg-Arg-|- and -Arg-Arg-Ser-Arg-|-, and of Z-Phe-Arg-|-aminomethylcoumarin sites. This chain is Lactotransferrin (LTF), found in Bubalus bubalis (Domestic water buffalo).